The chain runs to 303 residues: Flavin-dependent thymidylate synthase (303 aa).

Positions 41 to 258 (GKVALVDTMP…PVACEAFIDY (218 aa)) constitute a ThyX domain. FAD-binding positions include serine 95, 118–120 (RHR), and glutamate 126. Residues 115-118 (QWIR), 126-130 (EYSAR), and arginine 197 contribute to the dUMP site. The ThyX motif signature appears at 118–128 (RHRTANVNEYS). FAD contacts are provided by residues 213–215 (DLH) and histidine 219. Residue arginine 224 coordinates dUMP. The Involved in ionization of N3 of dUMP, leading to its activation role is filled by arginine 224.

The protein belongs to the thymidylate synthase ThyX family. As to quaternary structure, homotetramer. Requires FAD as cofactor.

The enzyme catalyses dUMP + (6R)-5,10-methylene-5,6,7,8-tetrahydrofolate + NADPH + H(+) = dTMP + (6S)-5,6,7,8-tetrahydrofolate + NADP(+). It functions in the pathway pyrimidine metabolism; dTTP biosynthesis. Functionally, catalyzes the reductive methylation of 2'-deoxyuridine-5'-monophosphate (dUMP) to 2'-deoxythymidine-5'-monophosphate (dTMP) while utilizing 5,10-methylenetetrahydrofolate (mTHF) as the methyl donor, and NADPH and FADH(2) as the reductant. The sequence is that of Flavin-dependent thymidylate synthase (thyA) from Dictyostelium discoideum (Social amoeba).